Here is a 468-residue protein sequence, read N- to C-terminus: UDP-N-acetylmuramoyl-L-alanine--L-glutamate ligase (468 aa).

122–128 (GTKGKST) provides a ligand contact to ATP.

Belongs to the MurCDEF family. MurD2 subfamily.

The protein localises to the cytoplasm. It catalyses the reaction UDP-N-acetyl-alpha-D-muramoyl-L-alanine + L-glutamate + ATP = UDP-N-acetyl-alpha-D-muramoyl-L-alanyl-L-glutamate + ADP + phosphate + H(+). It participates in cell wall biogenesis; peptidoglycan biosynthesis. Its function is as follows. Cell wall formation. Catalyzes the addition of L-glutamate to the nucleotide precursor UDP-N-acetylmuramoyl-L-alanine. The protein is UDP-N-acetylmuramoyl-L-alanine--L-glutamate ligase of Xylella fastidiosa (strain Temecula1 / ATCC 700964).